Here is a 244-residue protein sequence, read N- to C-terminus: Phosphoadenosine 5'-phosphosulfate reductase (244 aa).

Cysteine 239 serves as the catalytic Nucleophile; cysteine thiosulfonate intermediate.

This sequence belongs to the PAPS reductase family. CysH subfamily.

The protein localises to the cytoplasm. It catalyses the reaction [thioredoxin]-disulfide + sulfite + adenosine 3',5'-bisphosphate + 2 H(+) = [thioredoxin]-dithiol + 3'-phosphoadenylyl sulfate. Its pathway is sulfur metabolism; hydrogen sulfide biosynthesis; sulfite from sulfate: step 3/3. Its function is as follows. Catalyzes the formation of sulfite from phosphoadenosine 5'-phosphosulfate (PAPS) using thioredoxin as an electron donor. The chain is Phosphoadenosine 5'-phosphosulfate reductase from Klebsiella pneumoniae subsp. pneumoniae (strain ATCC 700721 / MGH 78578).